Consider the following 513-residue polypeptide: Cytochrome P450 705A1 (513 aa).

A helical membrane pass occupies residues 9–29 (QNCFIIILLCSFSLISYFVFF). Cys448 contributes to the heme binding site.

Belongs to the cytochrome P450 family. Heme is required as a cofactor. As to expression, expressed in root stele, root cortex, root epidermis, root pericycle of the root hair zone, and quiescent center at the root meristematic zone.

It is found in the membrane. Its function is as follows. Cleaves the arabidiol side chain at C15 to form 14-apo-arabidiol and a side-chain fragment. Involved in the biosynthesis of the volatile homoterpene (E)-4,8-dimethyl-1,3,7-nonatriene (DMNT) in roots. Involved in the production of DMNT by degrading the triterpene arabidiol. May be involved in the defense again the fungal root pathogen Pythium irregulare by producing DMNT. This is Cytochrome P450 705A1 from Arabidopsis thaliana (Mouse-ear cress).